The following is a 64-amino-acid chain: Conotoxin mr5.3 (64 aa).

The signal sequence occupies residues Met1–Ser19. Positions Val20 to Asn48 are excised as a propeptide. 4-carboxyglutamate is present on residues Glu56 and Glu60.

In terms of processing, contains 2 disulfide bonds that can be either 'C1-C3, C2-C4' or 'C1-C4, C2-C3', since these disulfide connectivities have been observed for conotoxins with cysteine framework V (for examples, see AC P0DQQ7 and AC P81755). In terms of tissue distribution, expressed by the venom duct.

It is found in the secreted. This chain is Conotoxin mr5.3, found in Conus marmoreus (Marble cone).